Reading from the N-terminus, the 271-residue chain is Urease accessory protein UreD (271 aa).

It belongs to the UreD family. UreD, UreF and UreG form a complex that acts as a GTP-hydrolysis-dependent molecular chaperone, activating the urease apoprotein by helping to assemble the nickel containing metallocenter of UreC. The UreE protein probably delivers the nickel.

It localises to the cytoplasm. In terms of biological role, required for maturation of urease via the functional incorporation of the urease nickel metallocenter. The polypeptide is Urease accessory protein UreD (Azorhizobium caulinodans (strain ATCC 43989 / DSM 5975 / JCM 20966 / LMG 6465 / NBRC 14845 / NCIMB 13405 / ORS 571)).